Consider the following 638-residue polypeptide: DEAD-box ATP-dependent RNA helicase 52B (638 aa).

Composition is skewed to low complexity over residues 1–21 (MRSS…AAAA) and 40–67 (GQAA…VGQP). The interval 1–129 (MRSSWADSAA…WDRRDREPDP (129 aa)) is disordered. The span at 79 to 112 (VNGGGGGGGGSVGGSRQGFGAGGRGGGGGGGGGA) shows a compositional bias: gly residues. Residues 119–128 (GWDRRDREPD) show a composition bias toward basic and acidic residues. A Q motif motif is present at residues 169 to 197 (NTFAEIDLGDALNENIRRCKYVKPTPVQR). The Helicase ATP-binding domain occupies 200-384 (IPISIAGRDL…SDFLADYIFL (185 aa)). Position 213-220 (213-220 (AQTGSGKT)) interacts with ATP. A DEAD box motif is present at residues 328–331 (DEAD). The region spanning 411 to 562 (YLMDLLHAQR…EVPQWLERYA (152 aa)) is the Helicase C-terminal domain. The disordered stretch occupies residues 565 to 638 (SSFGGGGGRN…GGQGFSSAWD (74 aa)). Gly residues predominate over residues 567–583 (FGGGGGRNRRSGGGARF). The segment covering 584–593 (GGRDFRRDRG) has biased composition (basic and acidic residues). The segment covering 594–632 (SGGGGYGGGGGGYGGGGYGGGGGGGGYGGGSSYGGGGQG) has biased composition (gly residues).

Belongs to the DEAD box helicase family. DDX3/DED1 subfamily.

It carries out the reaction ATP + H2O = ADP + phosphate + H(+). This is DEAD-box ATP-dependent RNA helicase 52B (PL10B) from Oryza sativa subsp. japonica (Rice).